The sequence spans 60 residues: Large ribosomal subunit protein bL32 (60 aa).

This sequence belongs to the bacterial ribosomal protein bL32 family.

This chain is Large ribosomal subunit protein bL32, found in Pediococcus pentosaceus (strain ATCC 25745 / CCUG 21536 / LMG 10740 / 183-1w).